Reading from the N-terminus, the 519-residue chain is Exodeoxyribonuclease 7 large subunit (519 aa).

Residues 493–519 (AISTGKSSNTNRKSAPAREPGKQGSLF) form a disordered region. Residues 496-505 (TGKSSNTNRK) are compositionally biased toward polar residues.

Belongs to the XseA family. As to quaternary structure, heterooligomer composed of large and small subunits.

Its subcellular location is the cytoplasm. The enzyme catalyses Exonucleolytic cleavage in either 5'- to 3'- or 3'- to 5'-direction to yield nucleoside 5'-phosphates.. Its function is as follows. Bidirectionally degrades single-stranded DNA into large acid-insoluble oligonucleotides, which are then degraded further into small acid-soluble oligonucleotides. The sequence is that of Exodeoxyribonuclease 7 large subunit from Chelativorans sp. (strain BNC1).